We begin with the raw amino-acid sequence, 351 residues long: Prostaglandin reductase 2 (351 aa).

Position 99–100 (Phe99–Tyr100) interacts with substrate. Residues Gly165 to Gly168, Lys192, Tyr208, Asn231, Cys253 to Tyr259, Phe287 to Val289, and Asn337 contribute to the NADP(+) site. Leu288 to Leu290 contacts substrate.

This sequence belongs to the NADP-dependent oxidoreductase L4BD family. Monomer. Widely expressed.

It localises to the cytoplasm. It catalyses the reaction 13,14-dihydro-15-oxo-prostaglandin E2 + NAD(+) = 15-oxoprostaglandin E2 + NADH + H(+). It carries out the reaction 13,14-dihydro-15-oxo-prostaglandin E2 + NADP(+) = 15-oxoprostaglandin E2 + NADPH + H(+). The enzyme catalyses 13,14-dihydro-15-oxo-PGF2alpha + NADP(+) = 15-oxoprostaglandin F2alpha + NADPH + H(+). The catalysed reaction is 13,14-dihydro-15-oxo-prostaglandin E1 + NADP(+) = 15-oxoprostaglandin E1 + NADPH + H(+). It catalyses the reaction 13,14-dihydro-15-oxo-prostaglandin F1alpha + NADP(+) = 15-oxoprostaglandin F1alpha + NADPH + H(+). Functions as 15-oxo-prostaglandin 13-reductase and acts on 15-keto-PGE1, 15-keto-PGE2, 15-keto-PGE1-alpha and 15-keto-PGE2-alpha with highest activity towards 15-keto-PGE2. Overexpression represses transcriptional activity of PPARG and inhibits adipocyte differentiation. This Homo sapiens (Human) protein is Prostaglandin reductase 2.